The following is a 92-amino-acid chain: Small ribosomal subunit protein uS19c (92 aa).

It belongs to the universal ribosomal protein uS19 family.

It is found in the plastid. It localises to the chloroplast. Its function is as follows. Protein S19 forms a complex with S13 that binds strongly to the 16S ribosomal RNA. This is Small ribosomal subunit protein uS19c (rps19) from Chlorella vulgaris (Green alga).